The following is a 208-amino-acid chain: CD209 antigen-like protein E (208 aa).

Topologically, residues methionine 1–histidine 16 are cytoplasmic. The helical; Signal-anchor for type II membrane protein transmembrane segment at isoleucine 17–isoleucine 37 threads the bilayer. Topologically, residues isoleucine 38–tryptophan 208 are extracellular. 3 disulfide bridges follow: cysteine 77–cysteine 88, cysteine 105–cysteine 197, and cysteine 176–cysteine 189. The C-type lectin domain maps to phenylalanine 83–lysine 198.

Its subcellular location is the membrane. Functionally, putative pathogen-recognition receptor. May mediate the endocytosis of pathogens which are subsequently degraded in lysosomal compartments. The chain is CD209 antigen-like protein E (Cd209e) from Mus musculus (Mouse).